The following is a 372-amino-acid chain: Bifunctional enzyme IspD/IspF (372 aa).

A 2-C-methyl-D-erythritol 4-phosphate cytidylyltransferase region spans residues 1-211; it reads MLDISLIMLG…SALKAPENEL (211 aa). The interval 212-372 is 2-C-methyl-D-erythritol 2,4-cyclodiphosphate synthase; that stretch reads FVGSGFDVHE…SLKFYNWTQI (161 aa). The a divalent metal cation site is built by Asp-218 and His-220. 4-CDP-2-C-methyl-D-erythritol 2-phosphate-binding positions include 218–220 and 244–245; these read DVH and HS. His-252 is an a divalent metal cation binding site. 4-CDP-2-C-methyl-D-erythritol 2-phosphate contacts are provided by residues 266-268, 271-275, 342-345, Phe-349, and Arg-352; these read DIG, FPDTD, and TTTE.

The protein in the N-terminal section; belongs to the IspD/TarI cytidylyltransferase family. IspD subfamily. It in the C-terminal section; belongs to the IspF family. A divalent metal cation serves as cofactor.

The catalysed reaction is 2-C-methyl-D-erythritol 4-phosphate + CTP + H(+) = 4-CDP-2-C-methyl-D-erythritol + diphosphate. It carries out the reaction 4-CDP-2-C-methyl-D-erythritol 2-phosphate = 2-C-methyl-D-erythritol 2,4-cyclic diphosphate + CMP. It functions in the pathway isoprenoid biosynthesis; isopentenyl diphosphate biosynthesis via DXP pathway; isopentenyl diphosphate from 1-deoxy-D-xylulose 5-phosphate: step 2/6. The protein operates within isoprenoid biosynthesis; isopentenyl diphosphate biosynthesis via DXP pathway; isopentenyl diphosphate from 1-deoxy-D-xylulose 5-phosphate: step 4/6. Its function is as follows. Bifunctional enzyme that catalyzes the formation of 4-diphosphocytidyl-2-C-methyl-D-erythritol from CTP and 2-C-methyl-D-erythritol 4-phosphate (MEP) (IspD), and catalyzes the conversion of 4-diphosphocytidyl-2-C-methyl-D-erythritol 2-phosphate (CDP-ME2P) to 2-C-methyl-D-erythritol 2,4-cyclodiphosphate (ME-CPP) with a corresponding release of cytidine 5-monophosphate (CMP) (IspF). The chain is Bifunctional enzyme IspD/IspF from Campylobacter concisus (strain 13826).